The chain runs to 778 residues: Receptor like protein 28 (778 aa).

The first 24 residues, 1–24 (MSGSHLRLRFLSLLLLCCVSSSTS), serve as a signal peptide directing secretion. Topologically, residues 25-739 (SLFTFSYPVL…EEQEQVLNWK (715 aa)) are extracellular. N-linked (GlcNAc...) asparagine glycosylation is found at Asn-60, Asn-72, Asn-93, Asn-106, Asn-111, Asn-147, Asn-170, and Asn-173. LRR repeat units follow at residues 99 to 123 (FHQLRFLNLSHNNFTSTSFPSEFGN), 125 to 147 (NKVEVLDLSFNSFTGQVPSSFSN), 148 to 171 (LSQLTELHLSNNQLTGGFPQVQNL), 172 to 195 (TNLSHLDFENNKFSGTVPSSLLMM), and 197 to 219 (FLSYLNLYGNHFTGSIEVSTSSK). Residues 220 to 240 (LEILYLGLKPFEGQILEPISK) form an LRR 6; degenerate repeat. LRR repeat units follow at residues 241–265 (LINLKRLELSFLNISYPLDLNLFSS), 266–291 (LKSLTYLDLSGNSISPRSLRSDLYIP), 293–313 (TLEKLLLEQCGIIEFPNILKT), 314–338 (LQKLEYIDMSNNRINGKIPEWLWRL), 340–363 (RLRSMSLANNSFNGFEGSTDVLVN), and 364–387 (SSMEILFMHSNNIQGALPNLPLSI). The N-linked (GlcNAc...) asparagine glycan is linked to Asn-253. N-linked (GlcNAc...) asparagine glycans are attached at residues Asn-348 and Asn-363. An LRR 13; degenerate repeat occupies 388-407 (KAFSAGYNNFSGEIPLSICN). Residues Asn-396, Asn-407, Asn-420, Asn-431, and Asn-476 are each glycosylated (N-linked (GlcNAc...) asparagine). LRR repeat units lie at residues 408 to 429 (RSSLAALSLPYNNFTGKIPQCL), 430 to 453 (SNLTFVHLRKNNLEGSIPDTLCAG), 455 to 477 (SLQTLDIGFNLISGTLPRSLLNC), 479 to 500 (SLEFLSVDNNRIKDTFPFWLKA), 501 to 525 (LPNLQVLILSSNKLYGPIAPPHQSP), 528 to 552 (FPELRIFEIADNMFTGTLSPRYFVN), 601 to 625 (LNSYSAIDFSGNRLEGQIPKSIGLL), 626 to 649 (KELIALNLSNNAFTCHIPLSLANA), 650 to 673 (TELESLDLSRNQLSGTIPNGLKTL), and 678 to 700 (YINVSHNKLKGTQIIGQHKSSFE). 2 N-linked (GlcNAc...) asparagine glycosylation sites follow: Asn-632 and Asn-648. Asn-680 carries N-linked (GlcNAc...) asparagine glycosylation. The helical transmembrane segment at 740–760 (AVATGYGTGLLLGLAIAQVIA) threads the bilayer. Residues 761–778 (SYKPDWLVKIIGLFRFCF) are Cytoplasmic-facing.

This sequence belongs to the RLP family.

Its subcellular location is the cell membrane. The sequence is that of Receptor like protein 28 from Arabidopsis thaliana (Mouse-ear cress).